A 360-amino-acid chain; its full sequence is MAQQKFLHQRPIQNPFTNPFSSSPLSTSSISNRPISLLSRNGLLLLLALLVILGVFLPWAGSPLFPSPNKLSPSQSKWRDYSLPQAVKFVAKNGTVIVCAVSYPYLPFLNNWLISVSRQKHQDQVLVIAEDYATLYKVNEKWPGHAVLIPPALDSQTAHKFGSQGFFNFTARRPQHLLEILELGYNVMYNDVDMVWLQDPFQYLEGKHDAYFMDDMTAIKPLDHSHDLPPPGKKGRTYICSCMIFLRPTNGAKLLMKKWIEELETQPWSRAKKANDQPGFNWALNKTANQVDMYLLSQAAFPTGGLYFKNKTWVKETKGKHAIIHNNYIVGFEKKIKRFRDFNLWLVDDHASESPLGKLE.

Residues 1–25 (MAQQKFLHQRPIQNPFTNPFSSSPL) form a disordered region. Residues 1–41 (MAQQKFLHQRPIQNPFTNPFSSSPLSTSSISNRPISLLSRN) are Cytoplasmic-facing. Residues 14 to 25 (NPFTNPFSSSPL) are compositionally biased toward low complexity. The chain crosses the membrane as a helical; Signal-anchor for type II membrane protein span at residues 42-62 (GLLLLLALLVILGVFLPWAGS). At 63-360 (PLFPSPNKLS…ASESPLGKLE (298 aa)) the chain is on the lumenal side. Asn-93 and Asn-168 each carry an N-linked (GlcNAc...) asparagine glycan. Positions 191 to 193 (DVD) match the DXD motif motif. N-linked (GlcNAc...) asparagine glycans are attached at residues Asn-285 and Asn-310.

The protein belongs to the glycosyltransferase 77 family. The cofactor is Mn(2+). It depends on Mg(2+) as a cofactor. As to expression, widely expressed.

The protein localises to the golgi apparatus membrane. Catalyzes the transfer of D-xylose from UDP-alpha-D-xylose onto L-fucose. Probably involved in the biosynthesis of rhamnogalacturonan II (RG-II) through xylosylation of the internal fucose moiety of the A-chain of RG-II, a structurally complex pectic polysaccharide of the primary cell wall. RG-II is essential for the cell wall integrity of rapidly growing tissues such as roots and pollen tube growth and elongation. This chain is UDP-D-xylose:L-fucose alpha-1,3-D-xylosyltransferase MGP4, found in Arabidopsis thaliana (Mouse-ear cress).